The primary structure comprises 484 residues: tRNA sulfurtransferase (484 aa).

A THUMP domain is found at Lys-63–Gln-167. Residues Leu-185–Met-186, Lys-267, Gly-289, and Gln-298 each bind ATP. A disulfide bridge links Cys-346 with Cys-457. One can recognise a Rhodanese domain in the interval Ala-405–Pro-483. Catalysis depends on Cys-457, which acts as the Cysteine persulfide intermediate.

Belongs to the ThiI family.

It is found in the cytoplasm. It carries out the reaction [ThiI sulfur-carrier protein]-S-sulfanyl-L-cysteine + a uridine in tRNA + 2 reduced [2Fe-2S]-[ferredoxin] + ATP + H(+) = [ThiI sulfur-carrier protein]-L-cysteine + a 4-thiouridine in tRNA + 2 oxidized [2Fe-2S]-[ferredoxin] + AMP + diphosphate. The catalysed reaction is [ThiS sulfur-carrier protein]-C-terminal Gly-Gly-AMP + S-sulfanyl-L-cysteinyl-[cysteine desulfurase] + AH2 = [ThiS sulfur-carrier protein]-C-terminal-Gly-aminoethanethioate + L-cysteinyl-[cysteine desulfurase] + A + AMP + 2 H(+). It functions in the pathway cofactor biosynthesis; thiamine diphosphate biosynthesis. In terms of biological role, catalyzes the ATP-dependent transfer of a sulfur to tRNA to produce 4-thiouridine in position 8 of tRNAs, which functions as a near-UV photosensor. Also catalyzes the transfer of sulfur to the sulfur carrier protein ThiS, forming ThiS-thiocarboxylate. This is a step in the synthesis of thiazole, in the thiamine biosynthesis pathway. The sulfur is donated as persulfide by IscS. This is tRNA sulfurtransferase from Pseudomonas fluorescens (strain Pf0-1).